The chain runs to 824 residues: Acyl-homoserine lactone acylase QuiP (824 aa).

Positions 1-26 (MASPALRHFLPRFGAAAAAASFLSLA) are cleaved as a signal peptide. Ser264 serves as the catalytic Nucleophile.

Belongs to the peptidase S45 family. As to quaternary structure, heterodimer of an alpha subunit and a beta subunit processed from the same precursor.

It localises to the periplasm. It catalyses the reaction an N-acyl-L-homoserine lactone + H2O = L-homoserine lactone + a carboxylate. Functionally, catalyzes the deacylation of acyl-homoserine lactone (AHL or acyl-HSL), releasing homoserine lactone (HSL) and the corresponding fatty acid. Possesses a specificity for the degradation of long-chain acyl-HSLs (side chains of seven or more carbons in length). The protein is Acyl-homoserine lactone acylase QuiP (quiP) of Pseudomonas syringae pv. tomato (strain ATCC BAA-871 / DC3000).